The chain runs to 82 residues: Cytochrome b559 subunit alpha (82 aa).

The chain crosses the membrane as a helical span at residues 21–35 (VIHSITIPSLFIAGW). Position 23 (H23) interacts with heme.

Belongs to the PsbE/PsbF family. As to quaternary structure, heterodimer of an alpha subunit and a beta subunit. PSII is composed of 1 copy each of membrane proteins PsbA, PsbB, PsbC, PsbD, PsbE, PsbF, PsbH, PsbI, PsbJ, PsbK, PsbL, PsbM, PsbT, PsbX, PsbY, PsbZ, Psb30/Ycf12, at least 3 peripheral proteins of the oxygen-evolving complex and a large number of cofactors. It forms dimeric complexes. It depends on heme b as a cofactor.

It localises to the plastid. Its subcellular location is the chloroplast thylakoid membrane. This b-type cytochrome is tightly associated with the reaction center of photosystem II (PSII). PSII is a light-driven water:plastoquinone oxidoreductase that uses light energy to abstract electrons from H(2)O, generating O(2) and a proton gradient subsequently used for ATP formation. It consists of a core antenna complex that captures photons, and an electron transfer chain that converts photonic excitation into a charge separation. The sequence is that of Cytochrome b559 subunit alpha from Stigeoclonium helveticum (Green alga).